A 191-amino-acid chain; its full sequence is MVKVCLFVADGTDEIEFSAPWGIFKRAEIPIDSVYVGENKDRLVKMSRDVEMYANRSYKEIPSADDFAKQYDIAIIPGGGLGAKTLSTTPFVQQVVKEFYKKPNKWIGMICAGTLTAKTSGLPNKQITGHPSVRGQLEEGGYKYLDQPVVLEENLITSQGPGTAMLFGLKLLEQVASKDKYNAVYKSLSMP.

Active-site residues include glutamate 16, cysteine 111, and histidine 130.

It belongs to the peptidase C56 family.

It is found in the cytoplasm. It localises to the nucleus. It carries out the reaction methylglyoxal + H2O = (R)-lactate + H(+). Catalyzes the conversion of methylglyoxal (MG) to D-lactate in a single glutathione (GSH)-independent step. May play a role in detoxifying endogenously produced glyoxals. Involved in protection against reactive oxygen species (ROS). The polypeptide is Glutathione-independent glyoxalase DJ-1 (Schizosaccharomyces pombe (strain 972 / ATCC 24843) (Fission yeast)).